The sequence spans 192 residues: Cysteine and glycine-rich protein 1 (192 aa).

Residues 10–61 (CGVCQKAVYFAEEVQCEGSSFHKSCFLCMVCKKNLDSTTVAVHGDEIYCKSC) form the LIM zinc-binding 1 domain. Residues 64-69 (KKYGPK) carry the Nuclear localization signal motif. One can recognise an LIM zinc-binding 2 domain in the interval 118–169 (CPRCGQAVYAAEKVIGAGKSWHKSCFRCAKCGKSLESTTLADKDGEIYCKGC).

Probable monomer. Interacts with ZYX. As to expression, most prominent in tissues that are enriched in smooth muscle cells, such as gizzard, stomach, and intestine. Lower level in the heart, no expression in liver, skeletal muscle, or brain.

The protein localises to the nucleus. The protein resides in the cytoplasm. It localises to the cytoskeleton. Heat stable protein, that interacts with zyxin/ZYX. May be a component of a signal transduction pathway that mediates adhesion-stimulated changes in gene expression. This Gallus gallus (Chicken) protein is Cysteine and glycine-rich protein 1 (CSRP1).